The sequence spans 110 residues: U-scoloptoxin(16)-Er7a (110 aa).

Positions 1-26 (MTSTRKLSVSCLIVFMVSSLIAVSSG) are cleaved as a signal peptide.

It belongs to the scoloptoxin-16 family. In terms of processing, contains 4 disulfide bonds. Expressed by the venom gland.

Its subcellular location is the secreted. The sequence is that of U-scoloptoxin(16)-Er7a from Ethmostigmus rubripes (Giant centipede).